Here is a 479-residue protein sequence, read N- to C-terminus: M-phase inducer phosphatase (479 aa).

Positions 182-218 (MTESNTNSTTTPPPKTPETARDCFKRPEPPASANCSP) are disordered. Residues 199 to 209 (ETARDCFKRPE) are compositionally biased toward basic and acidic residues. Residues 316–432 (KVASYRIIDC…FFESHVELCE (117 aa)) form the Rhodanese domain. Cys379 is an active-site residue. Ser455 carries the post-translational modification Phosphoserine.

The protein belongs to the MPI phosphatase family.

The catalysed reaction is O-phospho-L-tyrosyl-[protein] + H2O = L-tyrosyl-[protein] + phosphate. In terms of biological role, this protein functions as a dosage-dependent inducer in mitotic control. It is a tyrosine protein phosphatase required for progression of the cell cycle. It may directly dephosphorylate Cdk1 and activate the Cdk1 activity. The sequence is that of M-phase inducer phosphatase (stg) from Drosophila melanogaster (Fruit fly).